We begin with the raw amino-acid sequence, 218 residues long: MFNFWGSKEQQQGQSRPSPEASATPWYSPSLVTSPSSSRPQTSGQIPSHVSPGEAAGIIAILKDKSVDELRKLLSDKDAYQQFLHSLDQVTIQNNIREELRKETLHLARENLEKEPQIVELRNQCRIIRTSELATAQEKLNELENQREEILKFYSPGSLLHRLQDAMNQVDEESEELQQKFMEKDIDTAAFVQKYKKLRSKYHRRALIHLAAKTSSIG.

Residues 1–51 (MFNFWGSKEQQQGQSRPSPEASATPWYSPSLVTSPSSSRPQTSGQIPSHVS) form a disordered region. A compositionally biased stretch (polar residues) spans 8-17 (KEQQQGQSRP). Low complexity predominate over residues 28-40 (SPSLVTSPSSSRP). In terms of domain architecture, VPS37 C-terminal spans 137–218 (QEKLNELENQ…HLAAKTSSIG (82 aa)).

The protein belongs to the VPS37 family. In terms of assembly, component of the endosomal sorting required for transport complex I (ESCRT-I), composed of ELC, VPS28 and VPS37. Interacts with ELC.

It localises to the endosome. Functionally, component of the ESCRT-I complex (endosomal sorting complex required for transport I), a regulator of vesicular trafficking process. Required for the sorting of endocytic ubiquitinated cargos into multivesicular bodies (MVBs). This is Vacuolar protein-sorting-associated protein 37 homolog 2 (VPS37-2) from Arabidopsis thaliana (Mouse-ear cress).